A 187-amino-acid chain; its full sequence is Large ribosomal subunit protein uL10 (187 aa).

This sequence belongs to the universal ribosomal protein uL10 family. As to quaternary structure, part of the ribosomal stalk of the 50S ribosomal subunit. The N-terminus interacts with L11 and the large rRNA to form the base of the stalk. The C-terminus forms an elongated spine to which L12 dimers bind in a sequential fashion forming a multimeric L10(L12)X complex.

Forms part of the ribosomal stalk, playing a central role in the interaction of the ribosome with GTP-bound translation factors. The polypeptide is Large ribosomal subunit protein uL10 (Synechococcus sp. (strain JA-3-3Ab) (Cyanobacteria bacterium Yellowstone A-Prime)).